Here is a 254-residue protein sequence, read N- to C-terminus: Probable phosphomannomutase (254 aa).

Asp-14 functions as the Nucleophile in the catalytic mechanism. Mg(2+) is bound by residues Asp-14 and Asp-16. Asp-16 acts as the Proton donor/acceptor in catalysis. Positions 23, 129, 140, 147, 185, and 187 each coordinate alpha-D-mannose 1-phosphate. Mg(2+) is bound by residues Asp-214, Phe-226, Asp-228, and Thr-231.

The protein belongs to the eukaryotic PMM family. As to quaternary structure, homodimer.

Its subcellular location is the cytoplasm. The enzyme catalyses alpha-D-mannose 1-phosphate = D-mannose 6-phosphate. Its pathway is nucleotide-sugar biosynthesis; GDP-alpha-D-mannose biosynthesis; alpha-D-mannose 1-phosphate from D-fructose 6-phosphate: step 2/2. Functionally, involved in the synthesis of the GDP-mannose and dolichol-phosphate-mannose required for a number of critical mannosyl transfer reactions. This Caenorhabditis elegans protein is Probable phosphomannomutase.